The chain runs to 185 residues: MINEIKNDAKSRMEKCVESTKTQMAKVRTGRAHPSLLDTIKVSYYGSMTPLKQVGNVSIEDSRTLAVNVFDSTMIQAVEKAIMSSDLGLNPMSAGATIRIPLPALTEERRKDLIKVVRAEAENGRIAVRNVRRDANSDVKSLEKEKECTEDDVRRTEDDVQKFTDAHIKLIDEILTAKEAELMEV.

Belongs to the RRF family.

It is found in the cytoplasm. In terms of biological role, responsible for the release of ribosomes from messenger RNA at the termination of protein biosynthesis. May increase the efficiency of translation by recycling ribosomes from one round of translation to another. The chain is Ribosome-recycling factor from Shewanella sediminis (strain HAW-EB3).